A 194-amino-acid polypeptide reads, in one-letter code: MEHPFQLLMATSIAYLLGSIMGAYWVCRYFQLPDPTESGSGNPGATNIYRLGGPVPATLTLFWDAAKGAAAVCIAAMLGLSPYEQGVTAVAAIVGHMLPAFHHFKGGKGVATVLGAGLALAWQTTLALTLVWAAVVYWKRISSLASLTAALMAPWVAWRLNPEHLALFLILSLFILIRHRENIINLAKGKERSL.

A run of 5 helical transmembrane segments spans residues 7–27, 59–79, 86–106, 116–136, and 157–177; these read LLMATSIAYLLGSIMGAYWVC, LTLFWDAAKGAAAVCIAAMLG, GVTAVAAIVGHMLPAFHHFKG, AGLALAWQTTLALTLVWAAVV, and AWRLNPEHLALFLILSLFILI.

Belongs to the PlsY family. Probably interacts with PlsX.

The protein localises to the cell inner membrane. The enzyme catalyses an acyl phosphate + sn-glycerol 3-phosphate = a 1-acyl-sn-glycero-3-phosphate + phosphate. Its pathway is lipid metabolism; phospholipid metabolism. In terms of biological role, catalyzes the transfer of an acyl group from acyl-phosphate (acyl-PO(4)) to glycerol-3-phosphate (G3P) to form lysophosphatidic acid (LPA). This enzyme utilizes acyl-phosphate as fatty acyl donor, but not acyl-CoA or acyl-ACP. The protein is Glycerol-3-phosphate acyltransferase of Hahella chejuensis (strain KCTC 2396).